Reading from the N-terminus, the 792-residue chain is Molybdenum cofactor sulfurase (792 aa).

Lysine 246 carries the post-translational modification N6-(pyridoxal phosphate)lysine. Cysteine 414 is a catalytic residue. In terms of domain architecture, MOSC spans 646–792; the sequence is LRLLRQSSQR…LTCGDVVVVT (147 aa). Position 748 is a phosphoserine (serine 748).

The protein belongs to the class-V pyridoxal-phosphate-dependent aminotransferase family. MOCOS subfamily. Pyridoxal 5'-phosphate serves as cofactor.

It catalyses the reaction Mo-molybdopterin + L-cysteine + AH2 = thio-Mo-molybdopterin + L-alanine + A + H2O. The protein operates within cofactor biosynthesis; molybdopterin biosynthesis. In terms of biological role, sulfurates the molybdenum cofactor. Sulfation of molybdenum is essential for xanthine dehydrogenase (XDH) and aldehyde oxidase (ADO) enzymes in which molybdenum cofactor is liganded by 1 oxygen and 1 sulfur atom in active form. The protein is Molybdenum cofactor sulfurase of Drosophila pseudoobscura pseudoobscura (Fruit fly).